The primary structure comprises 858 residues: Translation initiation factor IF-2 (858 aa).

Residues 49–271 (TTTVTHPKSQ…NKPAPVRKDK (223 aa)) are disordered. Low complexity predominate over residues 80–226 (NQQQSNSRHQ…RFGGSLNSNN (147 aa)). Positions 239 to 256 (NRRRNNRNNKSRNNKNQR) are enriched in basic residues. Residues 359–528 (PRAPVVTVMG…LLQSEVLELT (170 aa)) enclose the tr-type G domain. Positions 368 to 375 (GHVDHGKT) are G1. 368 to 375 (GHVDHGKT) provides a ligand contact to GTP. Positions 393-397 (GITQA) are G2. Positions 414 to 417 (DTPG) are G3. Residues 414 to 418 (DTPGH) and 468 to 471 (NKID) contribute to the GTP site. Residues 468–471 (NKID) form a G4 region. The interval 504-506 (SAK) is G5.

Belongs to the TRAFAC class translation factor GTPase superfamily. Classic translation factor GTPase family. IF-2 subfamily.

The protein localises to the cytoplasm. Functionally, one of the essential components for the initiation of protein synthesis. Protects formylmethionyl-tRNA from spontaneous hydrolysis and promotes its binding to the 30S ribosomal subunits. Also involved in the hydrolysis of GTP during the formation of the 70S ribosomal complex. The polypeptide is Translation initiation factor IF-2 (Lactiplantibacillus plantarum (strain ATCC BAA-793 / NCIMB 8826 / WCFS1) (Lactobacillus plantarum)).